Consider the following 277-residue polypeptide: Diaminopimelate epimerase (277 aa).

3 residues coordinate substrate: asparagine 13, glutamine 46, and asparagine 66. The active-site Proton donor is cysteine 75. Residues 76–77 (GN), asparagine 160, asparagine 193, and 211–212 (ER) each bind substrate. The active-site Proton acceptor is cysteine 220. 221–222 (GS) lines the substrate pocket.

Belongs to the diaminopimelate epimerase family. As to quaternary structure, homodimer.

The protein localises to the cytoplasm. The enzyme catalyses (2S,6S)-2,6-diaminopimelate = meso-2,6-diaminopimelate. Its pathway is amino-acid biosynthesis; L-lysine biosynthesis via DAP pathway; DL-2,6-diaminopimelate from LL-2,6-diaminopimelate: step 1/1. In terms of biological role, catalyzes the stereoinversion of LL-2,6-diaminopimelate (L,L-DAP) to meso-diaminopimelate (meso-DAP), a precursor of L-lysine and an essential component of the bacterial peptidoglycan. In Legionella pneumophila (strain Lens), this protein is Diaminopimelate epimerase.